Consider the following 800-residue polypeptide: Integrin beta-5 (800 aa).

The signal sequence occupies residues 1–24 (MPRAPALLFSCLLGLCALVPRLPG). At 25-722 (LNICTSGSAT…PECGTAPSAM (698 aa)) the chain is on the extracellular side. The 50-residue stretch at 27-76 (ICTSGSATSCEECLLIHPKCAWCFKEDFGSLRSVTSRCDLKANLIRNGCG) folds into the PSI domain. Disulfide bonds link Cys28–Cys46, Cys36–Cys463, Cys39–Cys64, Cys49–Cys75, Cys202–Cys211, Cys259–Cys300, Cys401–Cys413, Cys433–Cys461, Cys465–Cys484, Cys476–Cys487, Cys489–Cys498, Cys500–Cys530, Cys513–Cys528, Cys522–Cys533, Cys535–Cys548, Cys550–Cys571, Cys555–Cys569, Cys563–Cys574, and Cys576–Cys585. One can recognise a VWFA domain in the interval 136 to 378 (YPVDLYYLMD…QLIINAYNSI (243 aa)). Mg(2+) contacts are provided by Ser147 and Ser149. The Ca(2+) site is built by Ser149, Asp152, Asp153, and Asp184. Residues Asn242, Asp244, Pro246, and Glu247 each coordinate Ca(2+). Glu247 lines the Mg(2+) pocket. N-linked (GlcNAc...) asparagine glycosylation is present at Asn347. Residue Gly362 coordinates Ca(2+). I-EGF domains lie at 465-499 (CSAG…TRCE), 500-549 (CQEG…SFCE), 550-586 (CDNF…DNCN), and 587-626 (CSTD…ETCE). Asn479 carries an N-linked (GlcNAc...) asparagine glycan. Asn552 carries N-linked (GlcNAc...) asparagine glycosylation. N-linked (GlcNAc...) asparagine glycosylation occurs at Asn586. Disulfide bonds link Cys587–Cys610, Cys594–Cys608, Cys602–Cys613, Cys615–Cys625, Cys628–Cys631, Cys635–Cys683, Cys641–Cys662, Cys644–Cys658, and Cys691–Cys715. N-linked (GlcNAc...) asparagine glycans are attached at residues Asn655 and Asn706. A helical membrane pass occupies residues 723–743 (TILLAVVGSILLTGFALLVIW). Residues 744 to 800 (KLLVTIHDRREFAKFQSERSRARYEMASNPLYRKPISTHTVDFTFNKFNKSYNGTVD) are Cytoplasmic-facing. Ser771 carries the post-translational modification Phosphoserine.

This sequence belongs to the integrin beta chain family. As to quaternary structure, heterodimer of an alpha and a beta subunit. Beta-5 (ITGB5) associates with alpha-V (ITGAV). Interacts with MYO10. Interacts with DAB2. Integrin ITGAV:ITGB5 interacts with FBLN5 (via N-terminus). ITGAV:ITGB5 interacts with CCN3. Interacts with tensin TNS3; TNS3 also interacts with PEAK1, thus acting as an adapter molecule to bridge the association of PEAK1 with ITGB5.

Its subcellular location is the cell membrane. Its function is as follows. Integrin alpha-V/beta-5 (ITGAV:ITGB5) is a receptor for fibronectin. It recognizes the sequence R-G-D in its ligand. The polypeptide is Integrin beta-5 (ITGB5) (Bos taurus (Bovine)).